A 78-amino-acid chain; its full sequence is Large ribosomal subunit protein bL28 (78 aa).

A disordered region spans residues 1–21; sequence MSRVCQVTGKSPITGNNVSHA. Positions 8–21 are enriched in polar residues; the sequence is TGKSPITGNNVSHA.

The protein belongs to the bacterial ribosomal protein bL28 family.

The polypeptide is Large ribosomal subunit protein bL28 (Hahella chejuensis (strain KCTC 2396)).